A 396-amino-acid polypeptide reads, in one-letter code: Vacuolar protease A (396 aa).

The first 17 residues, Met1–Ala17, serve as a signal peptide directing secretion. Positions Gly18 to Ser70 are cleaved as a propeptide — activation peptide. The 308-residue stretch at Tyr85 to Ala392 folds into the Peptidase A1 domain. Asp103 is an active-site residue. Cysteines 116 and 121 form a disulfide. Asn138 is a glycosylation site (N-linked (GlcNAc...) asparagine). The active site involves Asp284. Cysteines 318 and 351 form a disulfide. N-linked (GlcNAc...) asparagine glycosylation occurs at Asn335.

This sequence belongs to the peptidase A1 family.

It is found in the vacuole. This Neurospora crassa (strain ATCC 24698 / 74-OR23-1A / CBS 708.71 / DSM 1257 / FGSC 987) protein is Vacuolar protease A (pep-4).